We begin with the raw amino-acid sequence, 514 residues long: Sugar transport protein 10 (514 aa).

The Cytoplasmic segment spans residues 1-18; that stretch reads MAGGAFVSEGGGGGRSYE. Helical transmembrane passes span 19–39, 86–106, 113–133, 135–155, 170–190, 204–224, 285–305, 320–340, 350–370, and 389–409; these read GGVT…GLLF, LFTS…SVIT, VSMF…AFAV, VSML…ANQS, GALN…ANLI, VSLG…FILP, LIFC…VIMF, AALM…FVSI, LLFL…GSFI, and WILA…GPLG. The cysteines at positions 77 and 449 are disulfide-linked. Position 177 (Q177) interacts with beta-D-glucose. Beta-D-glucose-binding residues include Q295, Q296, N301, and N332. A beta-D-glucose-binding site is contributed by W410. 2 helical membrane passes run 428–448 and 453–473; these read INVS…LTML and FGLF…IYFL. At 474 to 514 the chain is on the cytoplasmic side; sequence LPETKGVPIEEMGRVWKQHWFWKKYIPEDAIIGGHDDNNTN.

Belongs to the major facilitator superfamily. Sugar transporter (TC 2.A.1.1) family. Expressed in primordia of lateral roots, pollinated stigmata, and pollen tubes.

The protein resides in the membrane. The enzyme catalyses D-glucose(out) + H(+)(out) = D-glucose(in) + H(+)(in). The catalysed reaction is D-mannose(out) + H(+)(out) = D-mannose(in) + H(+)(in). It catalyses the reaction D-galactose(in) + H(+)(in) = D-galactose(out) + H(+)(out). Hexose-H(+) symporter that catalyzes the high-affinity uptake of glucose, galactose and mannose. Proton-coupled symporter responsible for the uptake of glucose from the apoplast into the cells. The sequence is that of Sugar transport protein 10 from Arabidopsis thaliana (Mouse-ear cress).